The chain runs to 81 residues: Large ribosomal subunit protein uL23 (81 aa).

This sequence belongs to the universal ribosomal protein uL23 family. As to quaternary structure, part of the 50S ribosomal subunit. Contacts protein L29.

Functionally, binds to 23S rRNA. One of the proteins that surrounds the polypeptide exit tunnel on the outside of the ribosome. In Pyrobaculum aerophilum (strain ATCC 51768 / DSM 7523 / JCM 9630 / CIP 104966 / NBRC 100827 / IM2), this protein is Large ribosomal subunit protein uL23.